A 293-amino-acid polypeptide reads, in one-letter code: AKT-interacting protein (293 aa).

Polar residues predominate over residues 1-11 (MNPFWSMSTNA). A disordered region spans residues 1–44 (MNPFWSMSTNAGRKRSDGEEQSGSGEQRASPARPPFGKKQLPSI). Residues 75–223 (YLEYSLLAEF…VVDSVKLCNS (149 aa)) form the UBC core domain. The interval 260-293 (RPEDFNKGLPVSGLSWVKPGSTQPFSKEDNPLQT) is disordered.

Belongs to the ubiquitin-conjugating enzyme family. FTS subfamily.

Its subcellular location is the cytoplasm. The protein localises to the cell membrane. In terms of biological role, may function to promote vesicle trafficking and/or fusion. May also regulate apoptosis. The polypeptide is AKT-interacting protein (aktip) (Danio rerio (Zebrafish)).